The following is a 339-amino-acid chain: D-erythrose-4-phosphate dehydrogenase (339 aa).

NAD(+) is bound by residues 12-13 (RI) and Arg-81. Residues 154–156 (SCT), Arg-200, 213–214 (TK), and Arg-236 contribute to the substrate site. The active-site Nucleophile is the Cys-155. Asn-318 is a binding site for NAD(+).

Belongs to the glyceraldehyde-3-phosphate dehydrogenase family. Epd subfamily. In terms of assembly, homotetramer.

Its subcellular location is the cytoplasm. The enzyme catalyses D-erythrose 4-phosphate + NAD(+) + H2O = 4-phospho-D-erythronate + NADH + 2 H(+). It functions in the pathway cofactor biosynthesis; pyridoxine 5'-phosphate biosynthesis; pyridoxine 5'-phosphate from D-erythrose 4-phosphate: step 1/5. Catalyzes the NAD-dependent conversion of D-erythrose 4-phosphate to 4-phosphoerythronate. The chain is D-erythrose-4-phosphate dehydrogenase from Shigella dysenteriae serotype 1 (strain Sd197).